Reading from the N-terminus, the 183-residue chain is Protein Syd (183 aa).

The protein belongs to the Syd family.

Its subcellular location is the cell inner membrane. Functionally, interacts with the SecY protein in vivo. May bind preferentially to an uncomplexed state of SecY, thus functioning either as a chelating agent for excess SecY in the cell or as a regulatory factor that negatively controls the translocase function. This Idiomarina loihiensis (strain ATCC BAA-735 / DSM 15497 / L2-TR) protein is Protein Syd.